Reading from the N-terminus, the 121-residue chain is Small ribosomal subunit protein bS6 (121 aa).

This sequence belongs to the bacterial ribosomal protein bS6 family.

Binds together with bS18 to 16S ribosomal RNA. This chain is Small ribosomal subunit protein bS6, found in Pelagibacter ubique (strain HTCC1062).